A 564-amino-acid chain; its full sequence is Tripeptidyl-peptidase 1 (564 aa).

The first 19 residues, 1–19 (MGLQACLLGLFALILSGKC), serve as a signal peptide directing secretion. Positions 20–195 (SYSPEPDQRR…PEPQVTGTVG (176 aa)) are cleaved as a propeptide — removed in mature form. An intrachain disulfide couples C111 to C122. Positions 199-564 (GVTPSVIRKR…PALPKTLLNP (366 aa)) constitute a Peptidase S53 domain. N-linked (GlcNAc...) asparagine glycosylation is found at N210 and N222. Active-site charge relay system residues include E272 and D276. N286, N313, and N443 each carry an N-linked (GlcNAc...) asparagine glycan. 2 disulfide bridges follow: C365/C527 and C523/C538. The active-site Charge relay system is the S475. D518 and V519 together coordinate Ca(2+). Positions 540, 542, and 544 each coordinate Ca(2+).

As to quaternary structure, monomer. Interacts with CLN5. Interacts with CLN3. It depends on Ca(2+) as a cofactor. Activated by autocatalytic proteolytical processing upon acidification. N-glycosylation is required for processing and activity.

It localises to the lysosome. The protein localises to the melanosome. It carries out the reaction Release of an N-terminal tripeptide from a polypeptide, but also has endopeptidase activity.. Its function is as follows. Lysosomal serine protease with tripeptidyl-peptidase I activity. May act as a non-specific lysosomal peptidase which generates tripeptides from the breakdown products produced by lysosomal proteinases. Requires substrates with an unsubstituted N-terminus. This is Tripeptidyl-peptidase 1 (TPP1) from Pongo abelii (Sumatran orangutan).